We begin with the raw amino-acid sequence, 508 residues long: Protoporphyrinogen oxidase 2, chloroplastic/mitochondrial (508 aa).

Residues 1–22 constitute a chloroplast and mitochondrion transit peptide; the sequence is MASGAVADHQIEAVSGKRVAVV. FAD contacts are provided by residues 23–28, 46–47, and 68–71; these read GAGVSG, EA, and GANT. The tract at residues 219 to 239 is disordered; the sequence is KGGKSRDTKSSPGTKKGSRGS. FAD is bound by residues Val-268 and 475–477; that span reads LSV.

The protein belongs to the protoporphyrinogen/coproporphyrinogen oxidase family. Protoporphyrinogen oxidase subfamily. FAD serves as cofactor.

The protein resides in the plastid. It localises to the chloroplast. It is found in the mitochondrion. The enzyme catalyses protoporphyrinogen IX + 3 O2 = protoporphyrin IX + 3 H2O2. It participates in porphyrin-containing compound metabolism; protoporphyrin-IX biosynthesis; protoporphyrin-IX from protoporphyrinogen-IX: step 1/1. The protein operates within porphyrin-containing compound metabolism; chlorophyll biosynthesis. Catalyzes the 6-electron oxidation of protoporphyrinogen-IX to form protoporphyrin-IX. This Arabidopsis thaliana (Mouse-ear cress) protein is Protoporphyrinogen oxidase 2, chloroplastic/mitochondrial (PPOX2).